Reading from the N-terminus, the 223-residue chain is Type II restriction enzyme BglII (223 aa).

Residues D84 and V94 each contribute to the Mg(2+) site.

As to quaternary structure, homodimer. Requires Mg(2+) as cofactor.

It catalyses the reaction Endonucleolytic cleavage of DNA to give specific double-stranded fragments with terminal 5'-phosphates.. Functionally, a P subtype restriction enzyme that recognizes the double-stranded sequence 5'-AGATCT-3' and cleaves after A-1. The chain is Type II restriction enzyme BglII (bglIIR) from Bacillus subtilis.